Reading from the N-terminus, the 141-residue chain is Hemoglobin subunit alpha (141 aa).

Residues 1-141 enclose the Globin domain; the sequence is VLSEADKSNV…VSTVLTSKYR (141 aa). An O2-binding site is contributed by histidine 58. Histidine 87 provides a ligand contact to heme b.

Belongs to the globin family. In terms of assembly, heterotetramer of two alpha chains and two beta chains. When oxygenated in vitro, exists virtually only in polymeric form. When deoxygenated, forms tetramers, octamers and larger polymers. In terms of tissue distribution, red blood cells.

Functionally, involved in oxygen transport from the lung to the various peripheral tissues. The sequence is that of Hemoglobin subunit alpha from Paleosuchus palpebrosus (Cuvier's smooth-fronted caiman).